We begin with the raw amino-acid sequence, 1404 residues long: DNA-directed RNA polymerase subunit beta' (1404 aa).

C70, C72, C85, and C88 together coordinate Zn(2+). Mg(2+)-binding residues include D460, D462, and D464. Zn(2+)-binding residues include C814, C889, C896, and C899.

The protein belongs to the RNA polymerase beta' chain family. In terms of assembly, the RNAP catalytic core consists of 2 alpha, 1 beta, 1 beta' and 1 omega subunit. When a sigma factor is associated with the core the holoenzyme is formed, which can initiate transcription. It depends on Mg(2+) as a cofactor. Zn(2+) is required as a cofactor.

The catalysed reaction is RNA(n) + a ribonucleoside 5'-triphosphate = RNA(n+1) + diphosphate. Its function is as follows. DNA-dependent RNA polymerase catalyzes the transcription of DNA into RNA using the four ribonucleoside triphosphates as substrates. This is DNA-directed RNA polymerase subunit beta' from Xanthomonas axonopodis pv. citri (strain 306).